Reading from the N-terminus, the 121-residue chain is Two-component response regulator ORR13 (121 aa).

A Response regulatory domain is found at 5-121 (HVLVVDDTHV…ADVPRILNYI (117 aa)). Residue aspartate 55 is modified to 4-aspartylphosphate.

This sequence belongs to the ARR family. Type-A subfamily. Two-component system major event consists of a His-to-Asp phosphorelay between a sensor histidine kinase (HK) and a response regulator (RR). In plants, the His-to-Asp phosphorelay involves an additional intermediate named Histidine-containing phosphotransfer protein (HPt). This multistep phosphorelay consists of a His-Asp-His-Asp sequential transfer of a phosphate group between first a His and an Asp of the HK protein, followed by the transfer to a conserved His of the HPt protein and finally the transfer to an Asp in the receiver domain of the RR protein. Expressed in flowers and panicles.

Functionally, functions as a response regulator involved in His-to-Asp phosphorelay signal transduction system. Phosphorylation of the Asp residue in the receiver domain activates the ability of the protein to promote the transcription of target genes. Type-A response regulators seem to act as negative regulators of the cytokinin signaling. The protein is Two-component response regulator ORR13 of Oryza sativa subsp. japonica (Rice).